The chain runs to 588 residues: Intracellular maltogenic amylase (588 aa).

Ca(2+)-binding residues include Asn149, Ser155, Gly174, and Asp176. His249 and Arg325 together coordinate substrate. Asp327 acts as the Nucleophile in catalysis. The active-site Proton donor is Glu356. Residues 422 to 423 (HD), Asp467, and Arg471 contribute to the substrate site.

It belongs to the glycosyl hydrolase 13 family. BbmA subfamily. As to quaternary structure, monomer or homodimer; in equilibrium. Ca(2+) serves as cofactor.

The protein localises to the cytoplasm. In terms of biological role, hydrolyzes beta-cyclodextrin to maltose and glucose, soluble starch to maltose and glucose, and pullulan to panose with trace amounts of maltose and glucose. It is also able to hydrolyze acarbose. Can also exhibit a transglycosylation activity transferring glucose or maltose to another moiety of sugars by forming alpha-(1,6)- and alpha-(1,3)-glycosidic linkages upon the hydrolysis of substrate at concentrations of 5% or higher. In Bacillus subtilis (strain 168), this protein is Intracellular maltogenic amylase (bbmA).